The sequence spans 159 residues: Ribosomal RNA large subunit methyltransferase H (159 aa).

The S-adenosyl-L-methionine site is built by leucine 76 and glycine 108.

It belongs to the RNA methyltransferase RlmH family. As to quaternary structure, homodimer.

The protein resides in the cytoplasm. It catalyses the reaction pseudouridine(1915) in 23S rRNA + S-adenosyl-L-methionine = N(3)-methylpseudouridine(1915) in 23S rRNA + S-adenosyl-L-homocysteine + H(+). Functionally, specifically methylates the pseudouridine at position 1915 (m3Psi1915) in 23S rRNA. The protein is Ribosomal RNA large subunit methyltransferase H of Pediococcus pentosaceus (strain ATCC 25745 / CCUG 21536 / LMG 10740 / 183-1w).